We begin with the raw amino-acid sequence, 209 residues long: Ribosomal RNA small subunit methyltransferase G (209 aa).

Residues G74, F79, and R139 each contribute to the S-adenosyl-L-methionine site.

The protein belongs to the methyltransferase superfamily. RNA methyltransferase RsmG family.

It is found in the cytoplasm. The enzyme catalyses guanosine(527) in 16S rRNA + S-adenosyl-L-methionine = N(7)-methylguanosine(527) in 16S rRNA + S-adenosyl-L-homocysteine. Functionally, specifically methylates the N7 position of guanine in position 527 of 16S rRNA. In Halorhodospira halophila (strain DSM 244 / SL1) (Ectothiorhodospira halophila (strain DSM 244 / SL1)), this protein is Ribosomal RNA small subunit methyltransferase G.